We begin with the raw amino-acid sequence, 447 residues long: NADH-ubiquinone oxidoreductase chain 4 (447 aa).

13 helical membrane-spanning segments follow: residues I28–I48, M56–S76, F89–V109, F110–W130, V141–I161, L183–L203, P213–L233, Y246–L266, A273–M293, L298–L318, L331–L351, I374–A394, and Y409–L431.

It belongs to the complex I subunit 4 family.

It localises to the mitochondrion membrane. The enzyme catalyses a ubiquinone + NADH + 5 H(+)(in) = a ubiquinol + NAD(+) + 4 H(+)(out). Its function is as follows. Core subunit of the mitochondrial membrane respiratory chain NADH dehydrogenase (Complex I) that is believed to belong to the minimal assembly required for catalysis. Complex I functions in the transfer of electrons from NADH to the respiratory chain. The immediate electron acceptor for the enzyme is believed to be ubiquinone. The polypeptide is NADH-ubiquinone oxidoreductase chain 4 (mt:ND4) (Anopheles gambiae (African malaria mosquito)).